The chain runs to 130 residues: Small ribosomal subunit protein uS9 (130 aa).

Residues 109 to 130 form a disordered region; that stretch reads RKKERKKYGQRAARARFQYSKR.

This sequence belongs to the universal ribosomal protein uS9 family.

This chain is Small ribosomal subunit protein uS9, found in Oleidesulfovibrio alaskensis (strain ATCC BAA-1058 / DSM 17464 / G20) (Desulfovibrio alaskensis).